Here is a 132-residue protein sequence, read N- to C-terminus: Phycocyanin PC645 alpha-1 subunit (132 aa).

Positions 54 and 68 each coordinate (2R,3E)-phycocyanobilin. Mesobiliverdin is bound by residues C70, Q76, Y77, and K92. 15,16-dihydrobiliverdin is bound by residues P123 and I125.

Belongs to the phycoerythrin family. As to quaternary structure, heterotetramer of 2 different alpha chains and 2 identical beta chains which form 2 alpha-beta heterodimers within the heterotetramer. Contains two phycocyanobilin chromophores, one mesobiliverdin chromophore and one 15,16-dihydrobiliverdin chromophore with binding mediated by both the alpha and beta subunits.

The protein localises to the plastid. It localises to the chloroplast thylakoid membrane. Light-harvesting photosynthetic tetrapyrrole chromophore-protein from the phycobiliprotein complex. This chain is Phycocyanin PC645 alpha-1 subunit, found in Chroomonas sp. (strain CCMP270).